A 2145-amino-acid polypeptide reads, in one-letter code: U5 small nuclear ribonucleoprotein 200 kDa helicase (2145 aa).

2 disordered regions span residues 54–82 (GDRA…AQQF) and 202–243 (DSDE…GDGH). Over residues 220-231 (SEEESEEEEGVD) the composition is skewed to acidic residues. The Helicase ATP-binding 1 domain occupies 484–667 (DSALRSKEHL…FLRVKPEHLH (184 aa)). 497 to 504 (APTGAGKT) is a binding site for ATP. The DEAH box motif lies at 609-612 (DEIH). Residues 677–894 (PLEQQYIGVT…QMVSRLTDML (218 aa)) enclose the Helicase C-terminal domain. The region spanning 975-1278 (TELGRIASHF…IGAETVLPIS (304 aa)) is the SEC63 1 domain. The region spanning 1331–1506 (RTVFESNENV…WLGCSASATF (176 aa)) is the Helicase ATP-binding 2 domain. 1344 to 1351 (APNGSGKT) contacts ATP. The DEAH box motif lies at 1448–1451 (DDLH). Residues 1812 to 2124 (LNLGMIASYY…YLGADQEFDV (313 aa)) enclose the SEC63 2 domain.

Belongs to the helicase family. SKI2 subfamily.

Its subcellular location is the nucleus. It carries out the reaction ATP + H2O = ADP + phosphate + H(+). Its function is as follows. Catalyzes the ATP-dependent unwinding of U4/U6 RNA duplices, an essential step in the assembly of a catalytically active spliceosome. Plays a role in pre-mRNA splicing. The polypeptide is U5 small nuclear ribonucleoprotein 200 kDa helicase (Caenorhabditis elegans).